Reading from the N-terminus, the 434-residue chain is V-type ATP synthase beta chain (434 aa).

This sequence belongs to the ATPase alpha/beta chains family.

Produces ATP from ADP in the presence of a proton gradient across the membrane. The V-type beta chain is a regulatory subunit. In Borrelia garinii subsp. bavariensis (strain ATCC BAA-2496 / DSM 23469 / PBi) (Borreliella bavariensis), this protein is V-type ATP synthase beta chain.